The sequence spans 75 residues: Peptide Ctri10033 (75 aa).

A signal peptide spans 1–22 (MNSKYLFVFLILIVTFTDLCQG). Arginine 43 bears the Arginine amide mark. Positions 47 to 75 (ELGSQYDYLQDFRKRELDLDDLLSKFPDY) are excised as a propeptide.

This sequence belongs to the non-disulfide-bridged peptide (NDBP) superfamily. Short antimicrobial peptide (group 4) family. Expressed by the venom gland.

The protein resides in the secreted. The chain is Peptide Ctri10033 from Chaerilus tricostatus (Scorpion).